Consider the following 330-residue polypeptide: Methionyl-tRNA formyltransferase (330 aa).

Residue 121–124 (SLLP) coordinates (6S)-5,6,7,8-tetrahydrofolate.

Belongs to the Fmt family.

It carries out the reaction L-methionyl-tRNA(fMet) + (6R)-10-formyltetrahydrofolate = N-formyl-L-methionyl-tRNA(fMet) + (6S)-5,6,7,8-tetrahydrofolate + H(+). Functionally, attaches a formyl group to the free amino group of methionyl-tRNA(fMet). The formyl group appears to play a dual role in the initiator identity of N-formylmethionyl-tRNA by promoting its recognition by IF2 and preventing the misappropriation of this tRNA by the elongation apparatus. The polypeptide is Methionyl-tRNA formyltransferase (Burkholderia cenocepacia (strain ATCC BAA-245 / DSM 16553 / LMG 16656 / NCTC 13227 / J2315 / CF5610) (Burkholderia cepacia (strain J2315))).